Here is a 436-residue protein sequence, read N- to C-terminus: C4-dicarboxylate transport protein 2 (436 aa).

9 helical membrane-spanning segments follow: residues 14-34, 45-65, 77-97, 142-162, 198-218, 223-243, 290-310, 331-351, and 353-373; these read VLVA…TAVA, LIKM…IAGM, MALL…LVVV, VVGA…VLFG, PIGA…GSLV, LMLC…GGIA, VVGL…SIYL, ITLL…TGSG, and IVLA…LALI. The interval 414–436 is disordered; it reads ELAGEGNASSPASDIPVGGREAV.

Belongs to the dicarboxylate/amino acid:cation symporter (DAACS) (TC 2.A.23) family.

It localises to the cell inner membrane. Functionally, responsible for the transport of dicarboxylates such as succinate, fumarate, and malate from the periplasm across the membrane. In Pseudomonas aeruginosa (strain UCBPP-PA14), this protein is C4-dicarboxylate transport protein 2.